The sequence spans 323 residues: MSEHPENMTAPEWAAHIPVLLEEVLEYLAPRKGGRYLDGTLGLAGHASAVLERAGEGTELCGLDRDPEALRRATARLAPFAGQTHLYHLRYSEFEEALDDLGWPTVDGALIDIGVSSMQIDLAERGFSFHADGPLDMRMDPDAHESAWRLVNRERHEVLRDIIARYGEEPMAGRIARAIVDARNTGSIDTTLQLAAIVERAYPAKWRATARNHPATRTFQALRMAVNDELGELERFLDAILARLAPGGRLVVISFHSLEDRIVKHRMRHWAEGCRCPRHVPRCVCGHSPEVRILTKRPVTATDGELARNPRASSAKLRAAEKV.

S-adenosyl-L-methionine-binding positions include 44 to 46, D64, Y91, D112, and Q119; that span reads AGH.

Belongs to the methyltransferase superfamily. RsmH family.

Its subcellular location is the cytoplasm. The catalysed reaction is cytidine(1402) in 16S rRNA + S-adenosyl-L-methionine = N(4)-methylcytidine(1402) in 16S rRNA + S-adenosyl-L-homocysteine + H(+). Its function is as follows. Specifically methylates the N4 position of cytidine in position 1402 (C1402) of 16S rRNA. This is Ribosomal RNA small subunit methyltransferase H from Nitratidesulfovibrio vulgaris (strain ATCC 29579 / DSM 644 / CCUG 34227 / NCIMB 8303 / VKM B-1760 / Hildenborough) (Desulfovibrio vulgaris).